The primary structure comprises 529 residues: Glucose-6-phosphate isomerase (529 aa).

Catalysis depends on Glu-323, which acts as the Proton donor. Catalysis depends on residues His-352 and Lys-456.

This sequence belongs to the GPI family.

It localises to the cytoplasm. It carries out the reaction alpha-D-glucose 6-phosphate = beta-D-fructose 6-phosphate. It participates in carbohydrate biosynthesis; gluconeogenesis. It functions in the pathway carbohydrate degradation; glycolysis; D-glyceraldehyde 3-phosphate and glycerone phosphate from D-glucose: step 2/4. In terms of biological role, catalyzes the reversible isomerization of glucose-6-phosphate to fructose-6-phosphate. This is Glucose-6-phosphate isomerase from Geobacter sulfurreducens (strain ATCC 51573 / DSM 12127 / PCA).